Here is a 395-residue protein sequence, read N- to C-terminus: MQASCNQLHDPPGTAHEDAAASPCGHSRSTEGSLHPGDVHIQINSGPKEYSENPSSRNPRSGVCTCAHGCVHGRFRSYSHSEARPPDDFATESGEHGSGSFSEFRYLFKWLQKSLPYILILGIKLVMQHITGISLGIGLLTTFMYANKSIVNQVFLRERSSKLRCAWLLVFLAGSSVLLYYTFHSQSLHYSLIFLNPTLEQLSFWEVLWIVGITDFILKFFFMGLKCLILLVPSFIMPFKSKGYWYMLLEELCQYYRIFVPIPVWFRYLISYGEFGNVTTWSLGILLALLYLILKLLDFFGHLRTFRQVLRVFFTRPSYGVPASKRQCSDMDGICTICQAEFQKPVLLFCQHIFCEECITLWFNREKTCPLCRTVISECINKWKDGATSSHLQMY.

Disordered stretches follow at residues M1–N58 and Y78–G97. Helical transmembrane passes span I118 to G138, C165 to S185, I193 to I213, F216 to I236, I258 to V278, and L283 to L303. A required for ubiquitin ligase activity and for protection against ER stress-induced cell death region spans residues C328 to C379. Residues C335–R373 form an RING-type zinc finger.

As to expression, predominantly expressed in testis.

The protein localises to the early endosome membrane. It catalyses the reaction S-ubiquitinyl-[E2 ubiquitin-conjugating enzyme]-L-cysteine + [acceptor protein]-L-lysine = [E2 ubiquitin-conjugating enzyme]-L-cysteine + N(6)-ubiquitinyl-[acceptor protein]-L-lysine.. Its pathway is protein modification; protein ubiquitination. E3 ubiquitin-protein ligase that acts in the endoplasmic reticulum (ER)-associated degradation (ERAD) pathway, which targets misfolded proteins that accumulate in the endoplasmic reticulum (ER) for ubiquitination and subsequent proteasome-mediated degradation. Protects cells from ER stress-induced apoptosis. The protein is E3 ubiquitin-protein ligase RNFT1 (Rnft1) of Mus musculus (Mouse).